Here is a 506-residue protein sequence, read N- to C-terminus: 2-isopropylmalate synthase (506 aa).

The Pyruvate carboxyltransferase domain occupies 4-266 (ILFMDTTLRD…EPSITLKEIK (263 aa)). Mn(2+) contacts are provided by Asp-13, His-201, His-203, and Asn-237. The tract at residues 390–506 (NITQLQVHFV…KLKSFIQLVK (117 aa)) is regulatory domain.

It belongs to the alpha-IPM synthase/homocitrate synthase family. LeuA type 1 subfamily. In terms of assembly, homodimer. The cofactor is Mn(2+).

It is found in the cytoplasm. It carries out the reaction 3-methyl-2-oxobutanoate + acetyl-CoA + H2O = (2S)-2-isopropylmalate + CoA + H(+). It participates in amino-acid biosynthesis; L-leucine biosynthesis; L-leucine from 3-methyl-2-oxobutanoate: step 1/4. Its function is as follows. Catalyzes the condensation of the acetyl group of acetyl-CoA with 3-methyl-2-oxobutanoate (2-ketoisovalerate) to form 3-carboxy-3-hydroxy-4-methylpentanoate (2-isopropylmalate). The polypeptide is 2-isopropylmalate synthase (Bacillus thuringiensis subsp. konkukian (strain 97-27)).